The primary structure comprises 460 residues: Ribosome biogenesis protein YTM1 (460 aa).

The segment at 8–89 (VKIRFFTREK…EASLNVEYTR (82 aa)) is ubiquitin-like (UBL) domain. The interval 99-460 (SFSNEDWVSS…INKGDNIFKN (362 aa)) is sufficient for interaction with ERB1 and association with 66S pre-ribosomes. 7 WD repeats span residues 101 to 140 (SNEDWVSSLDVGDGSKHIISGSYDGIVRTWDLSGNVQKQY), 142 to 180 (GHSGPIRAVKYISNTRLVSAGNDRTLRLWKTKNDDLKLT), 206 to 244 (GHKAPVVSIDVSDNSRILSASYDNSIGFWSTIYKEMTVV), 285 to 325 (SHTA…CIDT), 327 to 366 (TTSYSLLSIAQLSTLNLLACGSSARHITLHDPRVGASSKV), 373 to 413 (GHKN…PMYT), and 424 to 460 (GVNDKVFAVKWAEKVGIISAGQDKKIQINKGDNIFKN).

This sequence belongs to the WD repeat WDR12/YTM1 family. In terms of assembly, component of the NOP7 complex, composed of ERB1, NOP7 and YTM1. The complex is held together by ERB1, which interacts with NOP7 via its N-terminal domain and with YTM1 via a high-affinity interaction between the seven-bladed beta-propeller domains of the 2 proteins. The NOP7 complex associates with the 66S pre-ribosome. Interacts (via UBL domain) with MDN1 (via VWFA/MIDAS domain).

It localises to the nucleus. The protein localises to the nucleolus. It is found in the nucleoplasm. Functionally, component of the NOP7 complex, which is required for maturation of the 25S and 5.8S ribosomal RNAs and formation of the 60S ribosome. The polypeptide is Ribosome biogenesis protein YTM1 (Saccharomyces cerevisiae (strain YJM789) (Baker's yeast)).